The sequence spans 158 residues: Disease resistance response protein Pi49 (158 aa).

The protein belongs to the BetVI family.

This is Disease resistance response protein Pi49 (DRR49A) from Pisum sativum (Garden pea).